Consider the following 55-residue polypeptide: Male-specific sperm protein Mst84Dc (55 aa).

This sequence belongs to the MST(3)CGP family. In terms of tissue distribution, testis.

The polypeptide is Male-specific sperm protein Mst84Dc (Mst84Dc) (Drosophila melanogaster (Fruit fly)).